We begin with the raw amino-acid sequence, 246 residues long: Bis(5'-nucleosyl)-tetraphosphatase PrpE [asymmetrical] (246 aa).

It belongs to the PrpE family. It depends on Ni(2+) as a cofactor.

The enzyme catalyses P(1),P(4)-bis(5'-guanosyl) tetraphosphate + H2O = GMP + GTP + 2 H(+). In terms of biological role, asymmetrically hydrolyzes Ap4p to yield AMP and ATP. This chain is Bis(5'-nucleosyl)-tetraphosphatase PrpE [asymmetrical], found in Bacillus cereus (strain ZK / E33L).